Here is a 561-residue protein sequence, read N- to C-terminus: Asparagine synthetase [glutamine-hydrolyzing] (561 aa).

Cysteine 2 acts as the For GATase activity in catalysis. The Glutamine amidotransferase type-2 domain maps to 2–191; it reads CGIWALFGSD…PGHYEVLDLK (190 aa). L-glutamine contacts are provided by residues 49 to 53, 75 to 77, and aspartate 97; these read RLAVV and NGE. The region spanning 213-536 is the Asparagine synthetase domain; sequence HALYDNVEKL…PGRADWLSHY (324 aa). ATP is bound by residues leucine 256, isoleucine 288, and 363 to 364; that span reads SG. Lysine 385 carries the post-translational modification N6-acetyllysine. Threonine 545 carries the phosphothreonine modification. At serine 557 the chain carries Phosphoserine.

The enzyme catalyses L-aspartate + L-glutamine + ATP + H2O = L-asparagine + L-glutamate + AMP + diphosphate + H(+). It participates in amino-acid biosynthesis; L-asparagine biosynthesis; L-asparagine from L-aspartate (L-Gln route): step 1/1. This Pongo abelii (Sumatran orangutan) protein is Asparagine synthetase [glutamine-hydrolyzing] (ASNS).